Reading from the N-terminus, the 401-residue chain is Ascaroside receptor GPR3 (401 aa).

Topologically, residues 1–16 are extracellular; it reads MQPFGDAWSQRHLAGV. Residues 17–37 traverse the membrane as a helical segment; the sequence is VLAGSVLSIVGSLYMILGFFF. The Cytoplasmic segment spans residues 38–47; it reads LRECRSFRHK. A helical transmembrane segment spans residues 48–68; the sequence is LILGLAVSDLLLALNFFIPSL. The Extracellular portion of the chain corresponds to 69–93; sequence SMVTGREISSPWNEGFCSANGFLMQ. Residues Cys-85 and Cys-159 are joined by a disulfide bond. A helical membrane pass occupies residues 94–114; that stretch reads LFFAQIDVWQISIALITLLML. Residues 115–128 are Cytoplasmic-facing; it reads SGPSMVLKWIRENV. A helical membrane pass occupies residues 129–149; it reads WAVWLFPWLVSLIAAFFAFGF. Residues 150 to 175 lie on the Extracellular side of the membrane; the sequence is WDYANVGGFCWLGSRNIRLYFNYIPR. Residues 176 to 196 traverse the membrane as a helical segment; sequence WIIILVCLVIYIAVYRLILHA. Topologically, residues 197–294 are cytoplasmic; it reads RRRANIQKTY…QKQVRKIAIQ (98 aa). A disordered region spans residues 206-259; sequence YRGRASDRAPPQPVTTTAPATNPESEKVNPDEISSGNGSSSLDTSRSGSSTGFT. Over residues 239–257 the composition is skewed to low complexity; the sequence is SSGNGSSSLDTSRSGSSTG. Residues 295–315 traverse the membrane as a helical segment; it reads MISYPLAYAVLWAIPTIVMII. At 316–321 the chain is on the extracellular side; the sequence is QVARGG. Residues 322–342 traverse the membrane as a helical segment; that stretch reads EGVSIHVEGLAKMLLVFNGFV. At 343–401 the chain is on the cytoplasmic side; the sequence is DAHVYGFNERTAMGWRQRIRPAAQEDDEEAAGTSGGVHEVVSRPEPTLKNPNVWQQNMV. The tract at residues 362–401 is disordered; the sequence is RPAAQEDDEEAAGTSGGVHEVVSRPEPTLKNPNVWQQNMV. A compositionally biased stretch (polar residues) spans 391-401; sequence KNPNVWQQNMV.

The protein belongs to the G-protein coupled receptor 1 family. In terms of assembly, interacts with ascaroside receptor GPR2; may form a functional heterodimer. Interacts with guanine nucleotide-binding protein alpha GPA2; to activate adenylate cyclase and positively regulate nematode trap formation.

The protein resides in the cell membrane. In terms of biological role, g protein-coupled receptor that senses nematode ascaroside pheromones and signals via adenylate cyclase to positively regulate trap formation for nematode capture. In Arthrobotrys oligospora (strain ATCC 24927 / CBS 115.81 / DSM 1491) (Nematode-trapping fungus), this protein is Ascaroside receptor GPR3.